The primary structure comprises 296 residues: uncharacterized protein (296 aa).

It to Synechocystis PCC 6803 sll0787 and M.jannaschii MJ0640.

This is an uncharacterized protein from Methanocaldococcus jannaschii (strain ATCC 43067 / DSM 2661 / JAL-1 / JCM 10045 / NBRC 100440) (Methanococcus jannaschii).